A 343-amino-acid chain; its full sequence is Adenine deaminase (343 aa).

Residues histidine 17, histidine 19, and histidine 197 each coordinate Zn(2+). Glutamate 200 (proton donor) is an active-site residue. Aspartate 278 serves as a coordination point for Zn(2+). Residue aspartate 279 participates in substrate binding.

This sequence belongs to the metallo-dependent hydrolases superfamily. Adenosine and AMP deaminases family. Adenine deaminase type 2 subfamily. Zn(2+) is required as a cofactor.

The enzyme catalyses adenine + H2O + H(+) = hypoxanthine + NH4(+). Its function is as follows. Catalyzes the hydrolytic deamination of adenine to hypoxanthine. Plays an important role in the purine salvage pathway and in nitrogen catabolism. The chain is Adenine deaminase from Rhodopseudomonas palustris (strain BisB18).